Here is a 443-residue protein sequence, read N- to C-terminus: Packaging protein 1 (443 aa).

A disordered region spans residues 1 to 75 (MSGAADGTVP…PEAAQPPPSR (75 aa)). Residues 13–56 (EDTHQEDSGERECEQRPVHSGREATGESDPALERPDHGERHGPE) show a composition bias toward basic and acidic residues. Residue 169–176 (GPTGSGKS) coordinates ATP. The DNA-binding stretch occupies residues 433–443 (VSYANKRKWYD).

Belongs to the adenoviridae packaging protein 1 family. Homodimer. Part of a genome packaging complex composed of packaging proteins 1, 2 and 3; this complex specifically binds to the packaging sequence on the left end of viral genomic DNA and performs packaging of the viral genome. Interacts with protein 33K.

The protein resides in the virion. Its subcellular location is the host nucleus. The protein localises to the host nucleoplasm. It is found in the host nucleolus. Component of the packaging machinery which encapsidates the viral DNA into preformed capsids and transcriptional activator of the viral major late promoter (MLP). Binds, along with packaging proteins 2 and 3, to the specific packaging sequence on the left end of viral genomic DNA and displays ATPase activity thereby providing the power stroke of the packaging machinery. The activity of packaging protein IVa2 is stimulated by protein 33K which acts as a terminase. May be the protein that pumps DNA into the capsid powered by ATP hydrolysis. Specifically binds to the 5'-CG-3' nucleotides of the repeats making up the packaging sequence. Component of the DEF-A and DEF-B transcription factors that bind downstream elements of the major late promoter (MLP), and stimulate transcription from the MLP after initiation of viral DNA replication. DEF-A is a heterodimer packaging proteins 1 and 2 and DEF-B is a homodimer of packaging protein 1. The chain is Packaging protein 1 from Pantherophis guttatus (Corn snake).